Here is an 84-residue protein sequence, read N- to C-terminus: Beta-defensin 119 (84 aa).

A signal peptide spans 1–21 (MKLLYLFLAILLAIEEPVISG). 3 cysteine pairs are disulfide-bonded: Cys-28/Cys-55, Cys-35/Cys-49, and Cys-39/Cys-56.

This sequence belongs to the beta-defensin family. In terms of tissue distribution, abundant expression in the male reproductive tract only. Abundant expressed in testis and the caput region of epididymis, but low in the corpus region.

It is found in the secreted. Its function is as follows. Has antibacterial activity. This Homo sapiens (Human) protein is Beta-defensin 119 (DEFB119).